The chain runs to 279 residues: Ribosomal RNA small subunit methyltransferase A (279 aa).

Positions 10, 12, 37, 58, 83, and 108 each coordinate S-adenosyl-L-methionine.

The protein belongs to the class I-like SAM-binding methyltransferase superfamily. rRNA adenine N(6)-methyltransferase family. RsmA subfamily.

The protein localises to the cytoplasm. The enzyme catalyses adenosine(1518)/adenosine(1519) in 16S rRNA + 4 S-adenosyl-L-methionine = N(6)-dimethyladenosine(1518)/N(6)-dimethyladenosine(1519) in 16S rRNA + 4 S-adenosyl-L-homocysteine + 4 H(+). Functionally, specifically dimethylates two adjacent adenosines (A1518 and A1519) in the loop of a conserved hairpin near the 3'-end of 16S rRNA in the 30S particle. May play a critical role in biogenesis of 30S subunits. The protein is Ribosomal RNA small subunit methyltransferase A of Synechococcus elongatus (strain ATCC 33912 / PCC 7942 / FACHB-805) (Anacystis nidulans R2).